The sequence spans 522 residues: U4/U6 small nuclear ribonucleoprotein Prp4 (522 aa).

Positions 1 to 13 (MASSRASSTQATK) are enriched in polar residues. Residues 1-20 (MASSRASSTQATKTKAPDDL) form a disordered region. Residue lysine 27 is modified to N6-acetyllysine. WD repeat units follow at residues 229 to 268 (GDDRPISYCHFSPNSKMLATACWSGLCKLWSVPDCNLLHT), 271 to 318 (GHNT…PVAD), 321 to 360 (GHTVRVARVMWHPSGRFLGTTCYDRSWRLWDLEAQEEILH), 363 to 402 (GHSMGVYDIAFHQDGSLAGTGGLDAFGRVWDLRTGRCIMF), 405 to 444 (GHLKEIYGINFSPNGYHIATGSGDNTCKVWDLRQRRCVYT), 447 to 487 (AHQN…PLKT), and 490 to 521 (GHEGKVMGLDISSDGQLIATCSYDRTFKLWMA).

As to quaternary structure, component of the precatalytic spliceosome (spliceosome B complex). Component of the U4/U6-U5 tri-snRNP complex, a building block of the precatalytic spliceosome (spliceosome B complex). The U4/U6-U5 tri-snRNP complex is composed of the U4, U6 and U5 snRNAs and at least PRPF3, PRPF4, PRPF6, PRPF8, PRPF31, SNRNP200, TXNL4A, SNRNP40, SNRPB, SNRPD1, SNRPD2, SNRPD3, SNRPE, SNRPF, SNRPG, DDX23, CD2BP2, PPIH, SNU13, EFTUD2, SART1 and USP39, plus LSM2, LSM3, LSM4, LSM5, LSM6, LSM7 and LSM8. Interacts directly with PRPF18, PPIH and PRPF3. Part of a heteromeric complex containing PPIH, PRPF3 and PRPF4 that is stable in the absence of RNA. Interacts with ERCC6.

It localises to the nucleus. The protein resides in the nucleus speckle. Functionally, plays a role in pre-mRNA splicing as component of the U4/U6-U5 tri-snRNP complex that is involved in spliceosome assembly, and as component of the precatalytic spliceosome (spliceosome B complex). The sequence is that of U4/U6 small nuclear ribonucleoprotein Prp4 (PRPF4) from Homo sapiens (Human).